A 220-amino-acid polypeptide reads, in one-letter code: Protein-L-isoaspartate O-methyltransferase (220 aa).

The active site involves Ser-70.

This sequence belongs to the methyltransferase superfamily. L-isoaspartyl/D-aspartyl protein methyltransferase family.

The protein localises to the cytoplasm. It catalyses the reaction [protein]-L-isoaspartate + S-adenosyl-L-methionine = [protein]-L-isoaspartate alpha-methyl ester + S-adenosyl-L-homocysteine. Catalyzes the methyl esterification of L-isoaspartyl residues in peptides and proteins that result from spontaneous decomposition of normal L-aspartyl and L-asparaginyl residues. It plays a role in the repair and/or degradation of damaged proteins. The chain is Protein-L-isoaspartate O-methyltransferase from Halorhodospira halophila (strain DSM 244 / SL1) (Ectothiorhodospira halophila (strain DSM 244 / SL1)).